We begin with the raw amino-acid sequence, 118 residues long: MSDNPQEYELDWDVEKRLKLNDAGLVPAIVQADGTNEVLMMAWMDTHALAYTLATRRGTYFSRSRNEYWIKGLTSGNVQEVTGVALDCDGDTVLLTVKQTGGACHTGAHTCFDNDVLL.

A Mg(2+)-binding site is contributed by D87. Residue C88 coordinates Zn(2+). Residues D89 and D91 each contribute to the Mg(2+) site. Positions 104 and 111 each coordinate Zn(2+).

It belongs to the PRA-CH family. In terms of assembly, homodimer. The cofactor is Mg(2+). Zn(2+) is required as a cofactor.

The protein localises to the cytoplasm. The enzyme catalyses 1-(5-phospho-beta-D-ribosyl)-5'-AMP + H2O = 1-(5-phospho-beta-D-ribosyl)-5-[(5-phospho-beta-D-ribosylamino)methylideneamino]imidazole-4-carboxamide. The protein operates within amino-acid biosynthesis; L-histidine biosynthesis; L-histidine from 5-phospho-alpha-D-ribose 1-diphosphate: step 3/9. Its function is as follows. Catalyzes the hydrolysis of the adenine ring of phosphoribosyl-AMP. This Corynebacterium glutamicum (strain R) protein is Phosphoribosyl-AMP cyclohydrolase.